We begin with the raw amino-acid sequence, 30 residues long: Diuretic hormone 2 (30 aa).

Valine amide is present on valine 30.

The protein belongs to the sauvagine/corticotropin-releasing factor/urotensin I family.

The protein resides in the secreted. Regulation of fluid secretion. This chain is Diuretic hormone 2, found in Manduca sexta (Tobacco hawkmoth).